Here is a 281-residue protein sequence, read N- to C-terminus: AT-hook motif nuclear-localized protein 20 (281 aa).

2 disordered regions span residues Met43–Phe85 and Met216–Gly247. The segment at residues Arg67–Lys79 is a DNA-binding region (a.T hook). Residues Pro91–His229 form the PPC domain.

The protein localises to the nucleus. Transcription factor that specifically binds AT-rich DNA sequences related to the nuclear matrix attachment regions (MARs). Negatively regulates plant innate immunity (PTI) to pathogens through the down-regulation of the PAMP-triggered NHO1 and FRK1 expression. This Arabidopsis thaliana (Mouse-ear cress) protein is AT-hook motif nuclear-localized protein 20.